The chain runs to 352 residues: C-C chemokine receptor type 5 (352 aa).

Residues 1 to 30 are Extracellular-facing; the sequence is MDYQVSSPIYDINYYTSEPCQKINVKQIAA. Tyr3 is modified (sulfotyrosine). 2 O-linked (GalNAc...) serine glycosylation sites follow: Ser6 and Ser7. 3 positions are modified to sulfotyrosine: Tyr10, Tyr14, and Tyr15. Disulfide bonds link Cys20–Cys269 and Cys101–Cys178. The helical transmembrane segment at 31 to 58 threads the bilayer; that stretch reads RLLPPLYSLVFIFGFVGNMLVILILINC. The Cytoplasmic segment spans residues 59-68; the sequence is KRLKSMTDIY. The helical transmembrane segment at 69–89 threads the bilayer; that stretch reads LLNLAISDLFFLLTVPFWAHY. Over 90 to 102 the chain is Extracellular; it reads AAAQWDFGNTMCQ. The chain crosses the membrane as a helical span at residues 103–124; the sequence is LLTGLYFIGFFSGIFFIILLTI. The Cytoplasmic segment spans residues 125 to 141; that stretch reads DRYLAVVHAVFALKART. A helical membrane pass occupies residues 142–166; the sequence is VTFGVVTSVITWVVAVFASLPGIIF. Topologically, residues 167-198 are extracellular; it reads TRSQKEGLHYTCSSHFPYSQYQFWKNFQTLKI. Residues 199–218 form a helical membrane-spanning segment; sequence VILGLVLPLLVMVICYSGIL. Topologically, residues 219 to 235 are cytoplasmic; that stretch reads KTLLRCRNEKKRHRAVR. A helical membrane pass occupies residues 236 to 260; it reads LIFTIMIVYFLFWAPYNIVLLLNTF. Topologically, residues 261 to 277 are extracellular; sequence QEFFGLNNCSSSNRLDQ. Residues 278–301 form a helical membrane-spanning segment; the sequence is AMQVTETLGMTHCCINPIIYAFVG. Residues 302–352 lie on the Cytoplasmic side of the membrane; the sequence is EKFRNYLLVFFQKHIAKRFCKCCSIFQQEAPERASSVYTRSTGEQEISVGL. Residues Cys321, Cys323, and Cys324 are each lipidated (S-palmitoyl cysteine). Residues Ser336, Ser337, Ser342, and Ser349 each carry the phosphoserine; by BARK1 modification.

Belongs to the G-protein coupled receptor 1 family. In terms of assembly, interacts with PRAF2. Efficient ligand binding to CCL3/MIP-1alpha and CCL4/MIP-1beta requires sulfation, O-glycosylation and sialic acid modifications. Glycosylation on Ser-6 is required for efficient binding of CCL4. Interacts with GRK2. Interacts with ARRB1 and ARRB2. Interacts with CNIH4. Interacts with S100A4; this interaction stimulates T-lymphocyte chemotaxis. (Microbial infection) Interacts with HIV-1 surface protein gp120. As to quaternary structure, (Microbial infection) May interact with human cytomegalovirus/HHV-5 protein UL78. In terms of processing, sulfated on at least 2 of the N-terminal tyrosines. Sulfation contributes to the efficiency of HIV-1 entry and is required for efficient binding of the chemokines, CCL3 and CCL4. Post-translationally, O-glycosylated, but not N-glycosylated. Ser-6 appears to be the major site even if Ser-7 may be also O-glycosylated. Also sialylated glycans present which contribute to chemokine binding. Thr-16 and Ser-17 may also be glycosylated and, if so, with small moieties such as a T-antigen. Palmitoylation in the C-terminal is important for cell surface expression, and to a lesser extent, for HIV entry. In terms of processing, phosphorylation on serine residues in the C-terminal is stimulated by binding CC chemokines especially by APO-RANTES. In terms of tissue distribution, highly expressed in spleen, thymus, in the myeloid cell line THP-1, in the promyeloblastic cell line KG-1a and on CD4+ and CD8+ T-cells. Medium levels in peripheral blood leukocytes and in small intestine. Low levels in ovary and lung.

It localises to the cell membrane. Functionally, receptor for a number of inflammatory CC-chemokines including CCL3/MIP-1-alpha, CCL4/MIP-1-beta and RANTES and subsequently transduces a signal by increasing the intracellular calcium ion level. May play a role in the control of granulocytic lineage proliferation or differentiation. Participates in T-lymphocyte migration to the infection site by acting as a chemotactic receptor. In terms of biological role, (Microbial infection) Acts as a coreceptor (CD4 being the primary receptor) of human immunodeficiency virus-1/HIV-1. The protein is C-C chemokine receptor type 5 of Homo sapiens (Human).